A 1203-amino-acid chain; its full sequence is Chromosome partition protein Smc (1203 aa).

32-39 is an ATP binding site; that stretch reads PNGSGKSN. 3 coiled-coil regions span residues 167–203, 250–288, and 327–497; these read ILKYRRRKEKALRKLDAMSANLARLTDLTTELRRQLK, MMRRDHDEAAARLAVASEELAAHEAALTELSGRAESVQQ, and DVLE…LERK. Residues 511–622 form the SMC hinge domain; the sequence is GLLGSIAKLV…VVNYLAEALG (112 aa). Coiled-coil stretches lie at residues 657–689, 720–765, and 976–1030; these read EVTSEIDKAGAELAAAEAHMAQLNAALSGALSE, RLGQ…NVEQ, and YDRA…RKDL.

This sequence belongs to the SMC family. As to quaternary structure, homodimer.

It localises to the cytoplasm. Required for chromosome condensation and partitioning. This chain is Chromosome partition protein Smc, found in Mycobacterium leprae (strain TN).